A 109-amino-acid chain; its full sequence is MIKLKVKKGDEVVVITGKHKGKKGKILKVFPEDSKVIVFGVNLVKKHTKSNQMSEGGIITKELPIHISNIAHIDPKTGNPTKVAFKFLEDGSKVRVAKKSGEIIGKEGK.

The protein belongs to the universal ribosomal protein uL24 family. In terms of assembly, part of the 50S ribosomal subunit.

Functionally, one of two assembly initiator proteins, it binds directly to the 5'-end of the 23S rRNA, where it nucleates assembly of the 50S subunit. One of the proteins that surrounds the polypeptide exit tunnel on the outside of the subunit. The sequence is that of Large ribosomal subunit protein uL24 from Rickettsia massiliae (strain Mtu5).